The primary structure comprises 1465 residues: DNA polymerase III PolC-type (1465 aa).

Positions 427-583 (YVVFDVETTG…YDAEATGRLL (157 aa)) constitute an Exonuclease domain.

The protein belongs to the DNA polymerase type-C family. PolC subfamily.

It localises to the cytoplasm. The catalysed reaction is DNA(n) + a 2'-deoxyribonucleoside 5'-triphosphate = DNA(n+1) + diphosphate. In terms of biological role, required for replicative DNA synthesis. This DNA polymerase also exhibits 3' to 5' exonuclease activity. This Streptococcus pyogenes serotype M2 (strain MGAS10270) protein is DNA polymerase III PolC-type.